Reading from the N-terminus, the 517-residue chain is Bifunctional purine biosynthesis protein PurH (517 aa).

Residues 1 to 146 enclose the MGS-like domain; sequence MGRLVLLSVS…KNFAHLTVLC (146 aa).

This sequence belongs to the PurH family.

It catalyses the reaction (6R)-10-formyltetrahydrofolate + 5-amino-1-(5-phospho-beta-D-ribosyl)imidazole-4-carboxamide = 5-formamido-1-(5-phospho-D-ribosyl)imidazole-4-carboxamide + (6S)-5,6,7,8-tetrahydrofolate. The enzyme catalyses IMP + H2O = 5-formamido-1-(5-phospho-D-ribosyl)imidazole-4-carboxamide. Its pathway is purine metabolism; IMP biosynthesis via de novo pathway; 5-formamido-1-(5-phospho-D-ribosyl)imidazole-4-carboxamide from 5-amino-1-(5-phospho-D-ribosyl)imidazole-4-carboxamide (10-formyl THF route): step 1/1. It functions in the pathway purine metabolism; IMP biosynthesis via de novo pathway; IMP from 5-formamido-1-(5-phospho-D-ribosyl)imidazole-4-carboxamide: step 1/1. This is Bifunctional purine biosynthesis protein PurH from Gloeothece citriformis (strain PCC 7424) (Cyanothece sp. (strain PCC 7424)).